Reading from the N-terminus, the 140-residue chain is Large ribosomal subunit protein uL11 (140 aa).

It belongs to the universal ribosomal protein uL11 family. As to quaternary structure, part of the ribosomal stalk of the 50S ribosomal subunit. Interacts with L10 and the large rRNA to form the base of the stalk. L10 forms an elongated spine to which L12 dimers bind in a sequential fashion forming a multimeric L10(L12)X complex. One or more lysine residues are methylated.

Forms part of the ribosomal stalk which helps the ribosome interact with GTP-bound translation factors. The protein is Large ribosomal subunit protein uL11 of Nitratidesulfovibrio vulgaris (strain ATCC 29579 / DSM 644 / CCUG 34227 / NCIMB 8303 / VKM B-1760 / Hildenborough) (Desulfovibrio vulgaris).